The following is a 289-amino-acid chain: tRNA pseudouridine synthase B (289 aa).

Aspartate 38 serves as the catalytic Nucleophile.

The protein belongs to the pseudouridine synthase TruB family. Type 1 subfamily.

The enzyme catalyses uridine(55) in tRNA = pseudouridine(55) in tRNA. Functionally, responsible for synthesis of pseudouridine from uracil-55 in the psi GC loop of transfer RNAs. This chain is tRNA pseudouridine synthase B, found in Clostridium tetani (strain Massachusetts / E88).